The chain runs to 39 residues: Mu-like prophage FluMu protein com (39 aa).

This sequence belongs to the com family.

This Haemophilus influenzae (strain ATCC 51907 / DSM 11121 / KW20 / Rd) protein is Mu-like prophage FluMu protein com.